The primary structure comprises 255 residues: Hemin import ATP-binding protein HmuV (255 aa).

The 237-residue stretch at 2-238 folds into the ABC transporter domain; the sequence is LRVENLSIRR…EPLRAVFGLE (237 aa). 34 to 41 is an ATP binding site; the sequence is GPNGAGKS.

Belongs to the ABC transporter superfamily. Heme (hemin) importer (TC 3.A.1.14.5) family. The complex is composed of two ATP-binding proteins (HmuV), two transmembrane proteins (HmuU) and a solute-binding protein (HmuT).

The protein resides in the cell inner membrane. Functionally, part of the ABC transporter complex HmuTUV involved in hemin import. Responsible for energy coupling to the transport system. This Pseudomonas aeruginosa (strain ATCC 15692 / DSM 22644 / CIP 104116 / JCM 14847 / LMG 12228 / 1C / PRS 101 / PAO1) protein is Hemin import ATP-binding protein HmuV.